We begin with the raw amino-acid sequence, 338 residues long: Phenylalanine--tRNA ligase alpha subunit (338 aa).

A Mg(2+)-binding site is contributed by glutamate 252.

Belongs to the class-II aminoacyl-tRNA synthetase family. Phe-tRNA synthetase alpha subunit type 1 subfamily. Tetramer of two alpha and two beta subunits. Mg(2+) serves as cofactor.

It localises to the cytoplasm. The catalysed reaction is tRNA(Phe) + L-phenylalanine + ATP = L-phenylalanyl-tRNA(Phe) + AMP + diphosphate + H(+). The sequence is that of Phenylalanine--tRNA ligase alpha subunit from Pseudomonas syringae pv. syringae (strain B728a).